Consider the following 1338-residue polypeptide: MDRASELLFYVNGRKVIEKNVDPETMLLPYLRKKLRLTGTKYGCGGGGCGACTVMISRYNPITKRIRHHPANACLIPICSLYGAAVTTVEGIGSTHTRIHPVQERIAKCHGTQCGFCTPGMVMSIYTLLRNHPEPTLDQLTDALGGNLCRCTGYRPIIDACKTFCKTSGCCQSKENGVCCLDQGINGLPEFEEGSKTSPKLFAEEEFLPLDPTQELIFPPELMIMAEKQSQRTRVFGSERMMWFSPVTLKELLEFKFKYPQAPVIMGNTSVGPEVKFKGVFHPVIISPDRIEELSVVNHAYNGLTLGAGLSLAQVKDILADVVQKLPEEKTQMYHALLKHLGTLAGSQIRNMASLGGHIISRHPDSDLNPILAVGNCTLNLLSKEGKRQIPLNEQFLSKCPNADLKPQEILVSVNIPYSRKWEFVSAFRQAQRQENALAIVNSGMRVFFGEGDGIIRELCISYGGVGPATICAKNSCQKLIGRHWNEQMLDIACRLILNEVSLLGSAPGGKVEFKRTLIISFLFKFYLEVSQILKKMDPVHYPSLADKYESALEDLHSKHHCSTLKYQNIGPKQHPEDPIGHPIMHLSGVKHATGEAIYCDDMPLVDQELFLTFVTSSRAHAKIVSIDLSEALSMPGVVDIMTAEHLSDVNSFCFFTEAEKFLATDKVFCVGQLVCAVLADSEVQAKRAAKRVKIVYQDLEPLILTIEESIQHNSSFKPERKLEYGNVDEAFKVVDQILEGEIHMGGQEHFYMETQSMLVVPKGEDQEMDVYVSTQFPKYIQDIVASTLKLPANKVMCHVRRVGGAFGGKVLKTGIIAAVTAFAANKHGRAVRCVLERGEDMLITGGRHPYLGKYKAGFMNDGRILALDMEHYSNAGASLDESLFVIEMGLLKMDNAYKFPNLRCRGWACRTNLPSNTAFRGFGFPQAALITESCITEVAAKCGLSPEKVRIINMYKEIDQTPYKQEINAKNLIQCWRECMAMSSYSLRKVAVEKFNAENYWKKKGLAMVPLKFPVGLGSRAAGQAAALVHIYLDGSVLVTHGGIEMGQGVHTKMIQVVSRELRMPMSNVHLRGTSTETVPNANISGGSVVADLNGLAVKDACQTLLKRLEPIISKNPKGTWKDWAQTAFDESINLSAVGYFRGYESDMNWEKGEGQPFEYFVYGAACSEVEIDCLTGDHKNIRTDIVMDVGCSINPAIDIGQIEGAFIQGMGLYTIEELNYSPQGILHTRGPDQYKIPAICDMPTELHIALLPPSQNSNTLYSSKGLGESGVFLGCSVFFAIHDAVSAARQERGLHGPLTLNSPLTPEKIRMACEDKFTKMIPRDEPGSYVPWNVPI.

Residues 5–92 (SELLFYVNGR…GAAVTTVEGI (88 aa)) form the 2Fe-2S ferredoxin-type domain. [2Fe-2S] cluster contacts are provided by cysteine 44, cysteine 49, cysteine 52, and cysteine 74. Glutamine 113 is a Mo-molybdopterin binding site. [2Fe-2S] cluster contacts are provided by cysteine 114, cysteine 117, cysteine 149, and cysteine 151. A Mo-molybdopterin-binding site is contributed by cysteine 151. An FAD-binding PCMH-type domain is found at 236-421 (FGSERMMWFS…VSVNIPYSRK (186 aa)). Residues 264 to 271 (VIMGNTSV), alanine 345, serine 354, histidine 358, aspartate 367, and leucine 411 each bind FAD. Mo-molybdopterin contacts are provided by residues 806-807 (AF) and methionine 1047. Serine 1068 is subject to Phosphoserine. Mo-molybdopterin is bound by residues 1088 to 1091 (GSVV), glutamine 1203, and leucine 1268. Glutamate 1270 serves as the catalytic Proton acceptor; for azaheterocycle hydroxylase activity.

Belongs to the xanthine dehydrogenase family. As to quaternary structure, homodimer. [2Fe-2S] cluster is required as a cofactor. It depends on FAD as a cofactor. Mo-molybdopterin serves as cofactor. In terms of tissue distribution, abundant in liver, expressed in adipose tissue and at lower levels in lung, skeletal muscle, pancreas. In contrast to mice, no significant gender difference in AOX1 expression level (at protein level).

It is found in the cytoplasm. The enzyme catalyses an aldehyde + O2 + H2O = a carboxylate + H2O2 + H(+). The catalysed reaction is retinal + O2 + H2O = retinoate + H2O2 + H(+). With respect to regulation, is very potently inhibited by raloxifene. Also inhibited by estradiol, ethinyl estradiol, hydralazine, menadione, isovanillin and thioridazine. Not inhibited by allopurinol, a xanthine dehydrogenase potent inhibitor. Its function is as follows. Oxidase with broad substrate specificity, oxidizing aromatic azaheterocycles, such as N1-methylnicotinamide, N-methylphthalazinium and phthalazine, as well as aldehydes, such as benzaldehyde, retinal, pyridoxal, and vanillin. Plays a key role in the metabolism of xenobiotics and drugs containing aromatic azaheterocyclic substituents. Participates in the bioactivation of prodrugs such as famciclovir, catalyzing the oxidation step from 6-deoxypenciclovir to penciclovir, which is a potent antiviral agent. Is probably involved in the regulation of reactive oxygen species homeostasis. May be a prominent source of superoxide generation via the one-electron reduction of molecular oxygen. May also catalyze nitric oxide (NO) production via the reduction of nitrite to NO with NADH or aldehyde as electron donor. May play a role in adipogenesis. This is Aldehyde oxidase from Homo sapiens (Human).